The chain runs to 710 residues: Chaperonin-containing T-complex member BBS12 (710 aa).

It belongs to the TCP-1 chaperonin family. BBS12 subfamily. Component of the chaperonin-containing T-complex (TRiC), a heterooligomeric complex of about 850 to 900 kDa that forms two stacked rings, 12 to 16 nm in diameter. Interacts with MKKS.

It localises to the cell projection. The protein resides in the cilium. Functionally, component of the chaperonin-containing T-complex (TRiC), a molecular chaperone complex that assists the folding of proteins upon ATP hydrolysis. As part of the TRiC complex may play a role in the assembly of BBSome, a complex involved in ciliogenesis regulating transports vesicles to the cilia. Involved in adipogenic differentiation. This Pongo abelii (Sumatran orangutan) protein is Chaperonin-containing T-complex member BBS12 (BBS12).